The following is a 90-amino-acid chain: Putative regulatory protein Cbei_1140 (90 aa).

It belongs to the RemA family.

The polypeptide is Putative regulatory protein Cbei_1140 (Clostridium beijerinckii (strain ATCC 51743 / NCIMB 8052) (Clostridium acetobutylicum)).